The chain runs to 157 residues: MGILRKKKHERNASFKSVLTSILATQAATFLLLISGVSLAGTAAAFIATMPLFVVFSPILVPAGITTGLLTTGLAAAGGAGATAVTIILWLYKRATGKEPPAVLSKVLKKIIPGAAAAPRAAPAAAPAAAPAAAPAAAPAPKPAAAPAPKPAAPPAL.

The segment at 2–20 (GILRKKKHERNASFKSVLT) is polar. A hydrophobic region spans residues 21–138 (SILATQAATF…AAPAAAPAAA (118 aa)). Transmembrane regions (helical) follow at residues 22–42 (ILAT…LAGT), 45–65 (AFIA…PAGI), and 72–92 (TGLA…LWLY). A run of 9 repeats spans residues 119–122 (PRAA), 123–126 (PAAA), 127–130 (PAAA), 131–134 (PAAA), 135–138 (PAAA), 139–142 (PAPK), 143–146 (PAAA), 147–150 (PAPK), and 151–154 (PAAP). The 9 X 4 AA tandem repeats of P-[AR]-[AP]-[AKP] stretch occupies residues 119–122 (PRAA). A disordered region spans residues 137-157 (AAPAPKPAAAPAPKPAAPPAL). The segment covering 138–157 (APAPKPAAAPAPKPAAPPAL) has biased composition (pro residues).

This sequence belongs to the oleosin family. As to expression, the full-length protein is found in the tapetal lipid bodies of immature anthers, the proteolytically cleaved C-terminal product is found on the coats of pollen grains. Highest expression is in microspores entering and undergoing mitosis. No expression is observed in male-sterile plants, green tissues or roots.

It is found in the lipid droplet. Its subcellular location is the membrane. Functionally, many of the major pollen coat proteins are derived from endoproteolytic cleavage of oleosin-like proteins. The protein is Oleosin-B1 (OlnB1) of Brassica napus (Rape).